We begin with the raw amino-acid sequence, 84 residues long: Cytochrome b559 subunit alpha (84 aa).

A helical membrane pass occupies residues 24-38; that stretch reads IIHAVTLPAIFIAGF. Histidine 26 contributes to the heme binding site.

This sequence belongs to the PsbE/PsbF family. Heterodimer of an alpha subunit and a beta subunit. PSII is composed of 1 copy each of membrane proteins PsbA, PsbB, PsbC, PsbD, PsbE, PsbF, PsbH, PsbI, PsbJ, PsbK, PsbL, PsbM, PsbT, PsbX, PsbY, Psb30/Ycf12, peripheral proteins PsbO, CyanoQ (PsbQ), PsbU, PsbV and a large number of cofactors. It forms dimeric complexes. The cofactor is heme b.

The protein resides in the cellular thylakoid membrane. Its function is as follows. This b-type cytochrome is tightly associated with the reaction center of photosystem II (PSII). PSII is a light-driven water:plastoquinone oxidoreductase that uses light energy to abstract electrons from H(2)O, generating O(2) and a proton gradient subsequently used for ATP formation. It consists of a core antenna complex that captures photons, and an electron transfer chain that converts photonic excitation into a charge separation. This Prochlorococcus marinus (strain MIT 9301) protein is Cytochrome b559 subunit alpha.